The primary structure comprises 447 residues: BAG family molecular chaperone regulator 5 (447 aa).

5 BAG domains span residues 9 to 86 (SISR…EQNA), 95 to 167 (QNIF…EDCM), 182 to 260 (SVAK…DLEE), 275 to 350 (SILK…DLKE), and 365 to 442 (SHKA…DLKS).

Binds to the ATPase domain of HSP/HSP70 chaperones. Binds PRKN. Interacts with HSPA8 and JPH2. As to expression, expressed in the heart.

In terms of biological role, co-chaperone for HSP/HSP70 proteins. It functions as a nucleotide-exchange factor promoting the release of ADP from HSP70, thereby activating HSP70-mediated protein refolding. Has an essential role in maintaining proteostasis at junctional membrane complexes (JMC), where it may function as a scaffold between the HSPA8 chaperone and JMC proteins enabling correct, HSPA8-dependent JMC protein folding. Inhibits both auto-ubiquitination of PRKN and ubiquitination of target proteins by PRKN. This chain is BAG family molecular chaperone regulator 5 (BAG5), found in Homo sapiens (Human).